The sequence spans 155 residues: Aspartate 1-decarboxylase (155 aa).

Residue serine 24 is the Schiff-base intermediate with substrate; via pyruvic acid of the active site. Serine 24 is modified (pyruvic acid (Ser)). Threonine 56 is a substrate binding site. Tyrosine 57 serves as the catalytic Proton donor. Position 72–74 (72–74 (GAA)) interacts with substrate.

This sequence belongs to the PanD family. In terms of assembly, heterooctamer of four alpha and four beta subunits. Pyruvate is required as a cofactor. Is synthesized initially as an inactive proenzyme, which is activated by self-cleavage at a specific serine bond to produce a beta-subunit with a hydroxyl group at its C-terminus and an alpha-subunit with a pyruvoyl group at its N-terminus.

Its subcellular location is the cytoplasm. It catalyses the reaction L-aspartate + H(+) = beta-alanine + CO2. It participates in cofactor biosynthesis; (R)-pantothenate biosynthesis; beta-alanine from L-aspartate: step 1/1. Functionally, catalyzes the pyruvoyl-dependent decarboxylation of aspartate to produce beta-alanine. The protein is Aspartate 1-decarboxylase of Agrobacterium fabrum (strain C58 / ATCC 33970) (Agrobacterium tumefaciens (strain C58)).